We begin with the raw amino-acid sequence, 142 residues long: MAAGGSDPRAGDVEEDASQLIFPKEFETAETLLNSEVHMLLEHRKQQNESAEDEQELSEVFMKTLNYTARFSRFKNRETIASVRSLLLQKKLHKFELACLANLCPETAEESKALIPSLEGRFEDEELQQILDDIQTKRSFQY.

This sequence belongs to the eukaryotic RPB4 RNA polymerase subunit family. In terms of assembly, component of the RNA polymerase II (Pol II) core complex consisting of 12 subunits: a ten-subunit catalytic core composed of POLR2A/RPB1, POLR2B/RPB2, POLR2C/RPB3, POLR2I/RPB9, POLR2J/RPB11, POLR2E/RPABC1, POLR2F/RPABC2, POLR2H/RPABC3, POLR2K/RPABC4 and POLR2L/RPABC5 and a mobile stalk composed of two subunits POLR2D/RPB4 and POLR2G/RPB7, protruding from the core and functioning primarily in transcription initiation. Part of Pol II(G) complex, in which Pol II core associates with an additional subunit POLR2M; unlike conventional Pol II, Pol II(G) functions as a transcriptional repressor. Part of TBP-based Pol II pre-initiation complex (PIC), in which Pol II core assembles with general transcription factors and other specific initiation factors including GTF2E1, GTF2E2, GTF2F1, GTF2F2, TCEA1, ERCC2, ERCC3, GTF2H2, GTF2H3, GTF2H4, GTF2H5, GTF2A1, GTF2A2, GTF2B and TBP; this large multi-subunit PIC complex mediates DNA unwinding and targets Pol II core to the transcription start site where the first phosphodiester bond forms.

It is found in the nucleus. Functionally, core component of RNA polymerase II (Pol II), a DNA-dependent RNA polymerase which synthesizes mRNA precursors and many functional non-coding RNAs using the four ribonucleoside triphosphates as substrates. Pol II is the central component of the basal RNA polymerase II transcription machinery. It is composed of mobile elements that move relative to each other. POLR2D/RPB4 is part of a subcomplex with POLR2G/RPB7 that binds to a pocket formed by POLR2A/RPB1, POLR2B/RPB2 and POLR2F/RPABC2 at the base of the clamp element. The POLR2D/RPB4-POLR2G/RPB7 subcomplex seems to lock the clamp via POLR2G/RPB7 in the closed conformation thus preventing double-stranded DNA to enter the active site cleft. The POLR2D/RPB4-POLR2G/RPB7 subcomplex binds single-stranded DNA and RNA. The chain is DNA-directed RNA polymerase II subunit RPB4 (POLR2D) from Homo sapiens (Human).